We begin with the raw amino-acid sequence, 360 residues long: tRNA N6-adenosine threonylcarbamoyltransferase (360 aa).

The Fe cation site is built by histidine 115 and histidine 119. Substrate-binding positions include 137–141 (LVSGG), aspartate 170, glycine 183, and asparagine 283. Aspartate 311 is a Fe cation binding site.

This sequence belongs to the KAE1 / TsaD family. Fe(2+) serves as cofactor.

It localises to the cytoplasm. It carries out the reaction L-threonylcarbamoyladenylate + adenosine(37) in tRNA = N(6)-L-threonylcarbamoyladenosine(37) in tRNA + AMP + H(+). Its function is as follows. Required for the formation of a threonylcarbamoyl group on adenosine at position 37 (t(6)A37) in tRNAs that read codons beginning with adenine. Is involved in the transfer of the threonylcarbamoyl moiety of threonylcarbamoyl-AMP (TC-AMP) to the N6 group of A37, together with TsaE and TsaB. TsaD likely plays a direct catalytic role in this reaction. In Sinorhizobium medicae (strain WSM419) (Ensifer medicae), this protein is tRNA N6-adenosine threonylcarbamoyltransferase.